We begin with the raw amino-acid sequence, 189 residues long: Interferon alpha-17 (189 aa).

Positions 1-23 (MALSFSLLMAVLVLSYKSICSLG) are cleaved as a signal peptide. Disulfide bonds link Cys-24–Cys-122 and Cys-52–Cys-162.

The protein belongs to the alpha/beta interferon family.

The protein resides in the secreted. Functionally, produced by macrophages, IFN-alpha have antiviral activities. Interferon stimulates the production of two enzymes: a protein kinase and an oligoadenylate synthetase. This chain is Interferon alpha-17 (IFNA17), found in Homo sapiens (Human).